A 330-amino-acid chain; its full sequence is Carbonic anhydrase (330 aa).

Positions 1-109 (MSAASAFAMN…AATRIDQITA (109 aa)) are chloroplast transit peptide-like.

This sequence belongs to the beta-class carbonic anhydrase family.

It is found in the cytoplasm. The catalysed reaction is hydrogencarbonate + H(+) = CO2 + H2O. Functionally, reversible hydration of carbon dioxide. This Flaveria bidentis (Coastal plain yellowtops) protein is Carbonic anhydrase.